The primary structure comprises 518 residues: Integrator complex subunit 14 (518 aa).

Positions 2 to 204 (PTVVVMDVSL…KNVQSMFGKL (203 aa)) constitute a VWFA domain. 3 residues coordinate Mg(2+): Ser10, Ser12, and Thr86. Lys418 carries the N6-acetyllysine modification.

It belongs to the Integrator subunit 14 family. In terms of assembly, component of the Integrator complex, composed of core subunits INTS1, INTS2, INTS3, INTS4, INTS5, INTS6, INTS7, INTS8, INTS9/RC74, INTS10, INTS11/CPSF3L, INTS12, INTS13, INTS14 and INTS15. The core complex associates with protein phosphatase 2A subunits PPP2CA and PPP2R1A, to form the Integrator-PP2A (INTAC) complex. INTS14 is part of the tail subcomplex, composed of INTS10, INTS13, INTS14 and INTS15.

Its subcellular location is the nucleus. Component of the integrator complex, a multiprotein complex that terminates RNA polymerase II (Pol II) transcription in the promoter-proximal region of genes. The integrator complex provides a quality checkpoint during transcription elongation by driving premature transcription termination of transcripts that are unfavorably configured for transcriptional elongation: the complex terminates transcription by (1) catalyzing dephosphorylation of the C-terminal domain (CTD) of Pol II subunit POLR2A/RPB1 and SUPT5H/SPT5, (2) degrading the exiting nascent RNA transcript via endonuclease activity and (3) promoting the release of Pol II from bound DNA. The integrator complex is also involved in terminating the synthesis of non-coding Pol II transcripts, such as enhancer RNAs (eRNAs), small nuclear RNAs (snRNAs), telomerase RNAs and long non-coding RNAs (lncRNAs). Within the integrator complex, INTS14 is part of the integrator tail module that acts as a platform for the recruitment of transcription factors at promoters. This is Integrator complex subunit 14 from Bos taurus (Bovine).